A 314-amino-acid polypeptide reads, in one-letter code: Ribosomal RNA small subunit methyltransferase H (314 aa).

Residues 32–34, Asp52, Phe79, Asp100, and Gln107 contribute to the S-adenosyl-L-methionine site; that span reads GGH.

This sequence belongs to the methyltransferase superfamily. RsmH family.

The protein resides in the cytoplasm. It catalyses the reaction cytidine(1402) in 16S rRNA + S-adenosyl-L-methionine = N(4)-methylcytidine(1402) in 16S rRNA + S-adenosyl-L-homocysteine + H(+). In terms of biological role, specifically methylates the N4 position of cytidine in position 1402 (C1402) of 16S rRNA. This is Ribosomal RNA small subunit methyltransferase H from Shouchella clausii (strain KSM-K16) (Alkalihalobacillus clausii).